A 97-amino-acid chain; its full sequence is Protein 9b (97 aa).

The region spanning 8-97 (VPPALHLVDP…PDEFVVVTAK (90 aa)) is the 9b domain.

In terms of assembly, homodimer.

It is found in the host cytoplasmic vesicle membrane. The protein localises to the host cytoplasm. The chain is Protein 9b from Bat coronavirus 279/2005 (BtCoV).